Here is a 232-residue protein sequence, read N- to C-terminus: Putative B3 domain-containing protein Os11g0242900 (232 aa).

The TF-B3 1 DNA-binding region spans 1-51; that stretch reads MTVELEKIAGSFFISKGWKTFVHRTGLLSGQYIRFQVLTPSKINVLLFDKK. The tract at residues 92 to 121 is disordered; it reads SHTSNKETSSDSRTESMTDIPSSSDNSGET. Residues 95–107 are compositionally biased toward basic and acidic residues; sequence SNKETSSDSRTES. Residues 108-121 are compositionally biased toward polar residues; it reads MTDIPSSSDNSGET. The TF-B3 2 DNA-binding region spans 140–232; the sequence is DIKNYISIIG…PNVKITIDVL (93 aa).

Its subcellular location is the nucleus. The sequence is that of Putative B3 domain-containing protein Os11g0242900 from Oryza sativa subsp. japonica (Rice).